The primary structure comprises 209 residues: Uracil phosphoribosyltransferase (209 aa).

Residues Arg79, Arg104, and 131–139 (DPMLATGGS) contribute to the 5-phospho-alpha-D-ribose 1-diphosphate site. Uracil is bound by residues Ile194 and 199–201 (GDA). Asp200 serves as a coordination point for 5-phospho-alpha-D-ribose 1-diphosphate.

Belongs to the UPRTase family. The cofactor is Mg(2+).

The enzyme catalyses UMP + diphosphate = 5-phospho-alpha-D-ribose 1-diphosphate + uracil. It functions in the pathway pyrimidine metabolism; UMP biosynthesis via salvage pathway; UMP from uracil: step 1/1. Allosterically activated by GTP. Its function is as follows. Catalyzes the conversion of uracil and 5-phospho-alpha-D-ribose 1-diphosphate (PRPP) to UMP and diphosphate. This Listeria monocytogenes serovar 1/2a (strain ATCC BAA-679 / EGD-e) protein is Uracil phosphoribosyltransferase.